We begin with the raw amino-acid sequence, 256 residues long: Homeobox-leucine zipper protein HOX18 (256 aa).

The tract at residues 52–116 (YDHGRDEEQA…GGGGGGTRKK (65 aa)) is disordered. Residues 102 to 112 (DGGSGGGGGGG) are compositionally biased toward gly residues. Residues 112 to 171 (GTRKKLQLTKEQSTLLEDSFRVHNILSHAQKHELARQLKLKPRQVEVWFQNRRARTKLKQ) constitute a DNA-binding region (homeobox). The leucine-zipper stretch occupies residues 170 to 214 (KQTEVDCEFLKRCCESLTEENKQLKHELMELRRLASPAAAAAGSQ).

Belongs to the HD-ZIP homeobox family. Class II subfamily. In terms of tissue distribution, expressed in roots, leaf sheaths and blades and panicles.

The protein resides in the nucleus. In terms of biological role, probable transcription factor. This Oryza sativa subsp. japonica (Rice) protein is Homeobox-leucine zipper protein HOX18 (HOX18).